Reading from the N-terminus, the 929-residue chain is MSQQNILAASVSALSLDESTVHTGGASSKKSRRPHRAYHNFSSGTVPTLGNSPYTTPQLNQQDGFQQPQAFTPKQFGGFNNGSGSVMSTPVMVSQERFGASEASSPYGQSMLDMTAPQPTSHIVPTQRFEDQAQYLQRSFETCRDSVPPLPTTQFYCVDQGSCDPHLMSLSMYNIPESEHLRAATKLPLGLTIQPFSTLTPNDAEVPTIPLPMDGTPLRCRRCRAYANPKFQFTYDSSVICNICRVKMQVPGEHFAPMGPNGQRSDLNEKSELLHGTVDFLVPSIYNAIQEKELLPLHYVFLIDVSLLANENGSSLAMVEGVRSCIEYISDFQPNCEVAIIVYDNKLRFFNLRPDLDNAQEYIVSELDDVFLPFYNGLFVKPGNSMKIINDTLIKISGYISTDKYSHVPQVCYGSALQAAKLALDTVTGGQGGKIICSLNSLPTIGNGNLSLKRDNAHIAHVKCDNGFYKKLASDFLKSYISLDLYVTNAGFIDMATVGHPVEMTSGILKYYPHFQQETDAFTLVNDMVTNVSNIVGYQALLKVRCSTGLSVEQYYCDSSDNTDHDPIIPVLTRDTTLDVLLKYDSKIKTGTDVHFQTALLYTDIDGVRKVRSINTSGAVSNNIREIFKFINQNPVMRIMIKDVIKTLGDCDFVKIRRLIDDKMVEILTQYRGLVSSNSSTQLILPDSIKTLPAYMLAFEKSELMKPNAQSTRGNERIYDLLKYDSLNSAQLCYKLYPQIVPFHVLLEETDLTFYDANDKLLQINSSSINNLSVRASHSNFINGGCYLIFQGDTIYLWFNENTNRMLLQDLLSVDESLPVSQISLFSGTLPETGTSINQKASNVIKNWQQVVNKSSLPLVLLRPNVDQYYSNVMSQLLCEDKTVNRIESYDNYLVIMHKKIQEKLQKDDFIKVSTAATHENIHQKFVQF.

S15 is subject to Phosphoserine. Over residues 18 to 28 (ESTVHTGGASS) the composition is skewed to polar residues. Residues 18–52 (ESTVHTGGASSKKSRRPHRAYHNFSSGTVPTLGNS) are disordered. A compositionally biased stretch (basic residues) spans 29–38 (KKSRRPHRAY). The segment covering 40-52 (NFSSGTVPTLGNS) has biased composition (polar residues). At T72 the chain carries Phosphothreonine. 5 positions are modified to phosphoserine: S83, S85, S94, S101, and S110. The residue at position 216 (T216) is a Phosphothreonine. Residues 220–244 (CRRCRAYANPKFQFTYDSSVICNIC) are zinc finger-like.

It belongs to the SEC23/SEC24 family. SEC24 subfamily. In terms of assembly, COPII is composed of at least five proteins: the SEC23/24 complex, the SEC13/31 complex and SAR1. Binds to SED5. Interacts with GHR1.

The protein resides in the cytoplasm. It localises to the golgi apparatus membrane. It is found in the endoplasmic reticulum membrane. In terms of biological role, component of the COPII coat, that covers ER-derived vesicles involved in transport from the endoplasmic reticulum to the Golgi apparatus. COPII acts in the cytoplasm to promote the transport of secretory, plasma membrane, and vacuolar proteins from the endoplasmic reticulum to the Golgi complex. This Saccharomyces cerevisiae (strain ATCC 204508 / S288c) (Baker's yeast) protein is SED5-binding protein 3 (SFB3).